Reading from the N-terminus, the 184-residue chain is UPF0301 protein RSKD131_2391 (184 aa).

It belongs to the UPF0301 (AlgH) family.

The polypeptide is UPF0301 protein RSKD131_2391 (Cereibacter sphaeroides (strain KD131 / KCTC 12085) (Rhodobacter sphaeroides)).